The following is a 280-amino-acid chain: Large ribosomal subunit protein uL2 (280 aa).

Disordered stretches follow at residues 1-58 and 226-280; these read MAIR…GGGH and MNPV…KHGR. Basic residues-rich tracts occupy residues 37 to 58 and 268 to 280; these read LHGH…GGGH and IVRR…KHGR.

It belongs to the universal ribosomal protein uL2 family. In terms of assembly, part of the 50S ribosomal subunit. Forms a bridge to the 30S subunit in the 70S ribosome.

Its function is as follows. One of the primary rRNA binding proteins. Required for association of the 30S and 50S subunits to form the 70S ribosome, for tRNA binding and peptide bond formation. It has been suggested to have peptidyltransferase activity; this is somewhat controversial. Makes several contacts with the 16S rRNA in the 70S ribosome. The polypeptide is Large ribosomal subunit protein uL2 (Mycolicibacterium paratuberculosis (strain ATCC BAA-968 / K-10) (Mycobacterium paratuberculosis)).